Reading from the N-terminus, the 172-residue chain is Scytalone dehydratase (172 aa).

The substrate site is built by Tyr-30, Tyr-50, and Phe-53. Residues His-85 and His-110 contribute to the active site. Asn-131 serves as a coordination point for substrate.

Belongs to the scytalone dehydratase family. Homotrimer. Each subunit contains an active site, located in the central part of the hydrophobic core of the monomer, which functions independently.

It is found in the endosome. The catalysed reaction is scytalone = 1,3,8-trihydroxynaphthalene + H2O. It participates in pigment biosynthesis; melanin biosynthesis. (N-phenoxypropyl)-carboxamides such as carpropamid and derivatives of norephedrine act as inhibitors of scytalone dehydratase activity. In terms of biological role, scytalone dehydratase; part of the gene cluster that mediates the biosynthesis of dihydroxynaphthalene melanin, a bluish-green pigment and a structural component of the conidial wall. Within the pathway, catalyzes the dehydration of scytalone as well as of vermelone. Is also able to dehydrate the alternate substrate 2,3-dihydro-2,5-dihydroxy-4H-benzopyran-4-one (DDBO) to 5-hydroxy-4H-1-benzopyran-4-one (HBO). The protein is Scytalone dehydratase (SDH1) of Pyricularia oryzae (strain 70-15 / ATCC MYA-4617 / FGSC 8958) (Rice blast fungus).